Consider the following 262-residue polypeptide: Small ribosomal subunit protein eS4 (262 aa).

The region spanning 42-105 is the S4 RNA-binding domain; sequence LPLIIMLRNR…GEFFRLLYDV (64 aa).

Belongs to the eukaryotic ribosomal protein eS4 family.

This chain is Small ribosomal subunit protein eS4 (RpS4), found in Ixodes scapularis (Black-legged tick).